Consider the following 275-residue polypeptide: Beta-lactamase OXA-15 (275 aa).

An N-terminal signal peptide occupies residues 1–21; that stretch reads MAIRIFAILFSIFSLATFAHA. The active-site Acyl-ester intermediate is the serine 72. At lysine 75 the chain carries N6-carboxylysine. Residue 210–212 coordinates substrate; sequence KTG.

Belongs to the class-D beta-lactamase family.

It catalyses the reaction a beta-lactam + H2O = a substituted beta-amino acid. In terms of biological role, hydrolyzes oxacillin, first-generation cephalosporins and ceftazidime. Does not hydrolyze cefotaxime or carbapenems. The chain is Beta-lactamase OXA-15 (bla) from Pseudomonas aeruginosa.